The following is a 507-amino-acid chain: Histidine ammonia-lyase (507 aa).

Residues 141 to 143 (ASG) constitute a cross-link (5-imidazolinone (Ala-Gly)). Ser-142 carries the post-translational modification 2,3-didehydroalanine (Ser).

This sequence belongs to the PAL/histidase family. In terms of processing, contains an active site 4-methylidene-imidazol-5-one (MIO), which is formed autocatalytically by cyclization and dehydration of residues Ala-Ser-Gly.

The protein localises to the cytoplasm. The enzyme catalyses L-histidine = trans-urocanate + NH4(+). It functions in the pathway amino-acid degradation; L-histidine degradation into L-glutamate; N-formimidoyl-L-glutamate from L-histidine: step 1/3. This is Histidine ammonia-lyase from Burkholderia vietnamiensis (strain G4 / LMG 22486) (Burkholderia cepacia (strain R1808)).